The chain runs to 95 residues: Co-chaperonin GroES (95 aa).

It belongs to the GroES chaperonin family. Heptamer of 7 subunits arranged in a ring. Interacts with the chaperonin GroEL.

The protein resides in the cytoplasm. Functionally, together with the chaperonin GroEL, plays an essential role in assisting protein folding. The GroEL-GroES system forms a nano-cage that allows encapsulation of the non-native substrate proteins and provides a physical environment optimized to promote and accelerate protein folding. GroES binds to the apical surface of the GroEL ring, thereby capping the opening of the GroEL channel. The protein is Co-chaperonin GroES of Nitratidesulfovibrio vulgaris (strain ATCC 29579 / DSM 644 / CCUG 34227 / NCIMB 8303 / VKM B-1760 / Hildenborough) (Desulfovibrio vulgaris).